The following is a 321-amino-acid chain: Ribose-phosphate pyrophosphokinase (321 aa).

Residues 44–46 (DGE) and 103–104 (RQ) each bind ATP. Residues His-137 and Asp-179 each coordinate Mg(2+). The active site involves Lys-202. Residues Arg-204, Asp-228, and 232–236 (DTAGT) each bind D-ribose 5-phosphate.

Belongs to the ribose-phosphate pyrophosphokinase family. Class I subfamily. In terms of assembly, homohexamer. Mg(2+) serves as cofactor.

It localises to the cytoplasm. It catalyses the reaction D-ribose 5-phosphate + ATP = 5-phospho-alpha-D-ribose 1-diphosphate + AMP + H(+). Its pathway is metabolic intermediate biosynthesis; 5-phospho-alpha-D-ribose 1-diphosphate biosynthesis; 5-phospho-alpha-D-ribose 1-diphosphate from D-ribose 5-phosphate (route I): step 1/1. Functionally, involved in the biosynthesis of the central metabolite phospho-alpha-D-ribosyl-1-pyrophosphate (PRPP) via the transfer of pyrophosphoryl group from ATP to 1-hydroxyl of ribose-5-phosphate (Rib-5-P). In Staphylococcus aureus (strain Mu50 / ATCC 700699), this protein is Ribose-phosphate pyrophosphokinase.